The sequence spans 511 residues: ATP synthase subunit alpha 1 (511 aa).

170–177 provides a ligand contact to ATP; it reads GDRQTGKT.

It belongs to the ATPase alpha/beta chains family. F-type ATPases have 2 components, CF(1) - the catalytic core - and CF(0) - the membrane proton channel. CF(1) has five subunits: alpha(3), beta(3), gamma(1), delta(1), epsilon(1). CF(0) has three main subunits: a(1), b(2) and c(9-12). The alpha and beta chains form an alternating ring which encloses part of the gamma chain. CF(1) is attached to CF(0) by a central stalk formed by the gamma and epsilon chains, while a peripheral stalk is formed by the delta and b chains.

It is found in the cell inner membrane. It catalyses the reaction ATP + H2O + 4 H(+)(in) = ADP + phosphate + 5 H(+)(out). Produces ATP from ADP in the presence of a proton gradient across the membrane. The alpha chain is a regulatory subunit. The polypeptide is ATP synthase subunit alpha 1 (Gluconobacter oxydans (strain 621H) (Gluconobacter suboxydans)).